The sequence spans 678 residues: Ribosome biogenesis protein BOP1 homolog (678 aa).

A compositionally biased stretch (basic and acidic residues) spans 1–10; that stretch reads MGHSDGDHGS. The segment at 1 to 73 is disordered; sequence MGHSDGDHGS…VAPRNTIGDV (73 aa). Residues 24–63 show a composition bias toward acidic residues; it reads WSDDDDEGSLSFEDSGEGSDAESDEPDAPAVEESDSSEDE. WD repeat units lie at residues 343–384, 386–424, 463–505, 508–548, 549–588, 592–631, and 647–678; these read GHNG…KVWN, GGVVHRIAWNPSPDRHILAAVVDHDLLLLNAEVGDEDAQ, IHHK…SHHP, KLPG…KKLE, SGVREISSISIHPGGDNVIVGSKDGKLCWFDTDLSTRPYK, NHSKDITNVTFHRKYPLFASSSEDCTAYVFHGMVYSDLNQ, and SDGRGVLDCKFHPRQPWLFTAGADSVVRLYCD.

It belongs to the WD repeat BOP1/ERB1 family.

It is found in the nucleus. It localises to the nucleolus. Its subcellular location is the nucleoplasm. Required for maturation of ribosomal RNAs and formation of the large ribosomal subunit. In Oryza sativa subsp. japonica (Rice), this protein is Ribosome biogenesis protein BOP1 homolog.